Consider the following 279-residue polypeptide: Thermitase (279 aa).

D5 is a binding site for Ca(2+). The Peptidase S8 domain maps to 12-277; sequence QYGPQKIQAP…KGRVNAYKAV (266 aa). The active-site Charge relay system is the D38. The Ca(2+) site is built by D47, D57, D60, D62, T64, and Q66. Catalysis depends on H71, which acts as the Charge relay system. The Ca(2+) site is built by V82, N85, T87, and I89. Na(+) is bound by residues A173, Y175, and A178. Residues V199 and D201 each coordinate Ca(2+). D201 serves as a coordination point for Na(+). The active-site Charge relay system is the S225.

It belongs to the peptidase S8 family. Requires Ca(2+) as cofactor. Na(+) is required as a cofactor.

It is found in the secreted. The catalysed reaction is Hydrolysis of proteins, including collagen.. In Thermoactinomyces vulgaris, this protein is Thermitase.